A 164-amino-acid polypeptide reads, in one-letter code: Pleckstrin homology domain-containing family J member 1 (164 aa).

The 94-residue stretch at 15–108 (PAEMAAELGM…WMEALQRASY (94 aa)) folds into the PH domain.

The protein is Pleckstrin homology domain-containing family J member 1 (Plekhj1) of Mus musculus (Mouse).